Consider the following 175-residue polypeptide: Probable chemoreceptor glutamine deamidase CheD (175 aa).

The protein belongs to the CheD family.

It catalyses the reaction L-glutaminyl-[protein] + H2O = L-glutamyl-[protein] + NH4(+). Its function is as follows. Probably deamidates glutamine residues to glutamate on methyl-accepting chemotaxis receptors (MCPs), playing an important role in chemotaxis. The protein is Probable chemoreceptor glutamine deamidase CheD of Jannaschia sp. (strain CCS1).